The sequence spans 104 residues: Large ribosomal subunit protein bL21 (104 aa).

It belongs to the bacterial ribosomal protein bL21 family. In terms of assembly, part of the 50S ribosomal subunit. Contacts protein L20.

Functionally, this protein binds to 23S rRNA in the presence of protein L20. The protein is Large ribosomal subunit protein bL21 of Endomicrobium trichonymphae.